An 896-amino-acid polypeptide reads, in one-letter code: Translation initiation factor IF-2 (896 aa).

Basic and acidic residues-rich tracts occupy residues 94-159 and 166-219; these read KRDP…KDKV and DMTK…EKNW. The tract at residues 94–307 is disordered; the sequence is KRDPQEAERL…GSALQQGFQK (214 aa). Residues 256 to 271 are compositionally biased toward basic residues; the sequence is GRGRNAKAARPAKKGN. Over residues 272 to 285 the composition is skewed to basic and acidic residues; that stretch reads KHAESKADREEARA. The tr-type G domain maps to 395-564; that stretch reads PRAPVVTIMG…LLQAEVLELK (170 aa). The tract at residues 404–411 is G1; that stretch reads GHVDHGKT. Position 404–411 (404–411) interacts with GTP; that stretch reads GHVDHGKT. The G2 stretch occupies residues 429 to 433; it reads GITQH. A G3 region spans residues 450 to 453; that stretch reads DTPG. GTP contacts are provided by residues 450–454 and 504–507; these read DTPGH and NKID. Residues 504–507 form a G4 region; that stretch reads NKID. A G5 region spans residues 540–542; that stretch reads SAK.

Belongs to the TRAFAC class translation factor GTPase superfamily. Classic translation factor GTPase family. IF-2 subfamily.

Its subcellular location is the cytoplasm. Functionally, one of the essential components for the initiation of protein synthesis. Protects formylmethionyl-tRNA from spontaneous hydrolysis and promotes its binding to the 30S ribosomal subunits. Also involved in the hydrolysis of GTP during the formation of the 70S ribosomal complex. The sequence is that of Translation initiation factor IF-2 (infB) from Klebsiella oxytoca.